The sequence spans 204 residues: MSETYELKAETRDRVGKGSSRELRRNGLIPAVIYGDKQPPLSIALSTKDVTMKIHAGGFMTTVATIDVNGEKIRVLPKDYQLDPVRDFTMHVDFLRVSKGSQVSVQVPVHFENEEKSPGLKQGGALNIVRHEVELNVSADNIPESLTVDLTGLKIGDTVHISNVKLPAGATPVIADRDFTVATITGRTQEAEPTEEAEGGEEEA.

Residues 1–20 are disordered; the sequence is MSETYELKAETRDRVGKGSS.

The protein belongs to the bacterial ribosomal protein bL25 family. CTC subfamily. In terms of assembly, part of the 50S ribosomal subunit; part of the 5S rRNA/L5/L18/L25 subcomplex. Contacts the 5S rRNA. Binds to the 5S rRNA independently of L5 and L18.

This is one of the proteins that binds to the 5S RNA in the ribosome where it forms part of the central protuberance. This Rhizobium meliloti (strain 1021) (Ensifer meliloti) protein is Large ribosomal subunit protein bL25.